The primary structure comprises 921 residues: Isoleucine--tRNA ligase (921 aa).

The 'HIGH' region motif lies at 57 to 67; that stretch reads PYANGDIHMGH. Glu-552 lines the L-isoleucyl-5'-AMP pocket. Residues 593-597 carry the 'KMSKS' region motif; sequence KMSKS. Lys-596 provides a ligand contact to ATP. Residues Cys-888, Cys-891, Cys-908, and Cys-911 each contribute to the Zn(2+) site.

This sequence belongs to the class-I aminoacyl-tRNA synthetase family. IleS type 1 subfamily. As to quaternary structure, monomer. Requires Zn(2+) as cofactor.

The protein resides in the cytoplasm. It catalyses the reaction tRNA(Ile) + L-isoleucine + ATP = L-isoleucyl-tRNA(Ile) + AMP + diphosphate. In terms of biological role, catalyzes the attachment of isoleucine to tRNA(Ile). As IleRS can inadvertently accommodate and process structurally similar amino acids such as valine, to avoid such errors it has two additional distinct tRNA(Ile)-dependent editing activities. One activity is designated as 'pretransfer' editing and involves the hydrolysis of activated Val-AMP. The other activity is designated 'posttransfer' editing and involves deacylation of mischarged Val-tRNA(Ile). This is Isoleucine--tRNA ligase from Bacillus cereus (strain G9842).